We begin with the raw amino-acid sequence, 430 residues long: Glutamate-1-semialdehyde 2,1-aminomutase (430 aa).

K269 carries the N6-(pyridoxal phosphate)lysine modification.

This sequence belongs to the class-III pyridoxal-phosphate-dependent aminotransferase family. HemL subfamily. In terms of assembly, homodimer. Pyridoxal 5'-phosphate serves as cofactor.

It is found in the cytoplasm. The catalysed reaction is (S)-4-amino-5-oxopentanoate = 5-aminolevulinate. It functions in the pathway porphyrin-containing compound metabolism; protoporphyrin-IX biosynthesis; 5-aminolevulinate from L-glutamyl-tRNA(Glu): step 2/2. This chain is Glutamate-1-semialdehyde 2,1-aminomutase, found in Desulfitobacterium hafniense (strain Y51).